Reading from the N-terminus, the 113-residue chain is Fruiting body-specific class I hydrophobin fbh1 (113 aa).

Positions 1 to 20 (MFSIRIATVVLAASALLAAA) are cleaved as a signal peptide. 4 disulfides stabilise this stretch: Cys33–Cys92, Cys40–Cys86, Cys41–Cys73, and Cys93–Cys106.

This sequence belongs to the fungal hydrophobin family. In terms of assembly, self-assembles to form functional amyloid fibrils called rodlets. Self-assembly into fibrillar rodlets occurs spontaneously at hydrophobic:hydrophilic interfaces and the rodlets further associate laterally to form amphipathic monolayers.

Its subcellular location is the secreted. The protein resides in the cell wall. Its function is as follows. Aerial growth, conidiation, and dispersal of filamentous fungi in the environment rely upon a capability of their secreting small amphipathic proteins called hydrophobins (HPBs) with low sequence identity. Class I can self-assemble into an outermost layer of rodlet bundles on aerial cell surfaces, conferring cellular hydrophobicity that supports fungal growth, development and dispersal; whereas Class II form highly ordered films at water-air interfaces through intermolecular interactions but contribute nothing to the rodlet structure. Fbh1 is a fruiting body-specific class I hydrophobin that is involved in the growth rate and primordia formation. The sequence is that of Fruiting body-specific class I hydrophobin fbh1 from Pleurotus ostreatus (strain PC15) (Oyster mushroom).